The following is a 332-amino-acid chain: Anthranilate phosphoribosyltransferase (332 aa).

5-phospho-alpha-D-ribose 1-diphosphate is bound by residues glycine 78, 81–82, serine 86, 88–91, 106–114, and serine 118; these read GD, NIST, and KHGNKSITS. Glycine 78 is a binding site for anthranilate. Mg(2+) is bound at residue serine 90. Asparagine 109 serves as a coordination point for anthranilate. Arginine 163 is an anthranilate binding site. Residues aspartate 222 and glutamate 223 each coordinate Mg(2+).

It belongs to the anthranilate phosphoribosyltransferase family. As to quaternary structure, homodimer. Mg(2+) is required as a cofactor.

It catalyses the reaction N-(5-phospho-beta-D-ribosyl)anthranilate + diphosphate = 5-phospho-alpha-D-ribose 1-diphosphate + anthranilate. The protein operates within amino-acid biosynthesis; L-tryptophan biosynthesis; L-tryptophan from chorismate: step 2/5. In terms of biological role, catalyzes the transfer of the phosphoribosyl group of 5-phosphorylribose-1-pyrophosphate (PRPP) to anthranilate to yield N-(5'-phosphoribosyl)-anthranilate (PRA). In Staphylococcus aureus (strain USA300), this protein is Anthranilate phosphoribosyltransferase.